The chain runs to 191 residues: HTH-type transcriptional regulator SAR0097 (191 aa).

An HTH tetR-type domain is found at 12–74 (AEYNQQIILT…AIMDKKVDQM (63 aa)). A DNA-binding region (H-T-H motif) is located at residues 37 to 56 (KMSDIAKISGVGVGTLYRHF).

The sequence is that of HTH-type transcriptional regulator SAR0097 from Staphylococcus aureus (strain MRSA252).